The following is a 370-amino-acid chain: MSELHYLYGKPTGTADLRTVNSDFIVKEILPFSPSGEGEHHLVHIRKDGLNTVQVAEMLAKFAKVHPKEVTYAGQKDKNAITEQWFGIRIPGKETPAWIELNSDRLTVLSSSRHSKKLRIGALLGNRFILTLRNVTNVEDIISRIEKVSQIGVPNYFGEQRFGHDGKNLVLGRQMLAGKKVKDRNKRSMYLSAVRSHLFNTVVSYRLTHYGTRPLAGDCVMLAGSKSFFVTPEWDLVVLKRLIEKDIQLSAPLWGRGKMLPQGEAAEVETQAMADLTEDCYGLEHAGLEQERRPLLLEPQGLKHEQTSDGLVLEFILPAGCFATSLLRELVDYQDVKELQWQTTLTAETNVVTESNTAAANVSDNGESAS.

The active-site Nucleophile is Asp77. A TRUD domain is found at 152–297 (GVPNYFGEQR…LEQERRPLLL (146 aa)).

This sequence belongs to the pseudouridine synthase TruD family.

The catalysed reaction is uridine(13) in tRNA = pseudouridine(13) in tRNA. Responsible for synthesis of pseudouridine from uracil-13 in transfer RNAs. The sequence is that of tRNA pseudouridine synthase D from Shewanella oneidensis (strain ATCC 700550 / JCM 31522 / CIP 106686 / LMG 19005 / NCIMB 14063 / MR-1).